Reading from the N-terminus, the 701-residue chain is Phytyl ester synthase 2, chloroplastic (701 aa).

The N-terminal 65 residues, M1–V65, are a transit peptide targeting the chloroplast. A disordered region spans residues S37–T64.

It belongs to the diacylglycerol acyltransferase family.

The protein localises to the plastid. It localises to the chloroplast. The protein resides in the plastoglobule. It carries out the reaction a 1,2-diacyl-3-O-(beta-D-galactosyl)-sn-glycerol + a 1,2-diacylglycerol = an acyl-3-O-(beta-D-galactosyl)-sn-glycerol + a triacylglycerol. It catalyses the reaction a 1,2-diacylglycerol + a fatty acyl-CoA = a triacylglycerol + CoA. The enzyme catalyses a fatty acyl-[ACP] + a 1,2-diacylglycerol = a triacylglycerol + holo-[ACP]. The catalysed reaction is phytol + a fatty acyl-CoA = a fatty acid phytyl ester + CoA. It carries out the reaction phytol + tetradecanoyl-CoA = tetradecanoate phytyl ester + CoA. It catalyses the reaction a 1,3-diacylglycerol + a fatty acyl-CoA = a triacylglycerol + CoA. The enzyme catalyses 1,2-dihexanoylglycerol + tetradecanoyl-CoA = 1,2-dihexanoyl-3-tetradecanoylglycerol + CoA. The catalysed reaction is 1,2-dihexanoylglycerol + hexadecanoyl-CoA = 1,2-dihexanoyl-3-hexadecanoylglycerol + CoA. It carries out the reaction 1,2-dihexanoylglycerol + octadecanoyl-CoA = 1,2-dihexanoyl-3-octadecanoylglycerol + CoA. It catalyses the reaction (7Z,10Z,13Z)-hexadecatrienoyl-CoA + 1,2-dihexanoylglycerol = 1,2-dihexanoyl-3-(7Z,10Z,13Z-hexadecatrienoyl)-glycerol + CoA. The enzyme catalyses 1,2-dihexanoylglycerol + (9Z)-octadecenoyl-CoA = 1,2-dihexanoyl-3-(9Z-octadecenoyl)-glycerol + CoA. The catalysed reaction is 1,2-dihexanoylglycerol + (9Z,12Z,15Z)-octadecatrienoyl-CoA = 1,2-dihexanoyl-3-(9Z,12Z,15Z-octadecatrienoyl)-glycerol + CoA. It carries out the reaction phytol + decanoyl-CoA = decanoate phytyl ester + CoA. It catalyses the reaction (7Z,10Z,13Z)-hexadecatrienoyl-CoA + phytol = (7Z,10Z,13Z)-hexadecatrienoate phytyl ester + CoA. The enzyme catalyses phytol + dodecanoyl-CoA = dodecanoate phytyl ester + CoA. Its function is as follows. Acyltransferase involved in fatty acid phytyl ester synthesis in chloroplasts, a process required for the maintenance of the photosynthetic membrane integrity during abiotic stress and senescence. Exhibits phytyl ester synthesis and diacylglycerol acyltransferase activities with broad substrate specificities, and can employ acyl-CoAs, acyl carrier proteins, and galactolipids as acyl donors. The polypeptide is Phytyl ester synthase 2, chloroplastic (Arabidopsis thaliana (Mouse-ear cress)).